The primary structure comprises 115 residues: Alpha-endosulfine (115 aa).

Residues 1–10 (MSSENLSDTQ) show a composition bias toward polar residues. The tract at residues 1-27 (MSSENLSDTQMEYEDEKQDSQEKNANL) is disordered. Serine 65 carries the phosphoserine; by GWL modification. The disordered stretch occupies residues 77–115 (NKQLPVAGPDKNLVTGDHIPTPQDLPQRRSSLVTSKLAG). Residues 104 to 115 (RRSSLVTSKLAG) show a composition bias toward polar residues.

Belongs to the endosulfine family. Phosphorylation at Ser-65 by gwl during mitosis is essential for interaction with ppp2r2d (PR55-delta) and subsequent inactivation of PP2A.

It localises to the cytoplasm. Functionally, protein phosphatase inhibitor that specifically inhibits protein phosphatase 2A (PP2A) during mitosis. When phosphorylated at Ser-67 during mitosis, specifically interacts with ppp2r2d (PR55-delta) and inhibits its activity, leading to inactivation of PP2A, an essential condition to keep cyclin-B1-CDK1 activity high during M phase. The sequence is that of Alpha-endosulfine (ensa) from Salmo salar (Atlantic salmon).